A 180-amino-acid chain; its full sequence is Inner membrane-spanning protein YciB (180 aa).

The next 6 helical transmembrane spans lie at 4-24 (FLSE…GGGI), 25-45 (QHAT…CYVI), 49-69 (VSKL…ITLI), 76-96 (IKIK…MSGI), 118-138 (ITLS…NEVV), and 150-170 (FKVF…LPLL).

Belongs to the YciB family.

Its subcellular location is the cell inner membrane. Its function is as follows. Plays a role in cell envelope biogenesis, maintenance of cell envelope integrity and membrane homeostasis. In Rickettsia rickettsii (strain Iowa), this protein is Inner membrane-spanning protein YciB.